The following is a 285-amino-acid chain: Bifunctional protein FolD (285 aa).

NADP(+) contacts are provided by residues 166–168 (GRS), S191, and I232.

It belongs to the tetrahydrofolate dehydrogenase/cyclohydrolase family. Homodimer.

The enzyme catalyses (6R)-5,10-methylene-5,6,7,8-tetrahydrofolate + NADP(+) = (6R)-5,10-methenyltetrahydrofolate + NADPH. The catalysed reaction is (6R)-5,10-methenyltetrahydrofolate + H2O = (6R)-10-formyltetrahydrofolate + H(+). It participates in one-carbon metabolism; tetrahydrofolate interconversion. Catalyzes the oxidation of 5,10-methylenetetrahydrofolate to 5,10-methenyltetrahydrofolate and then the hydrolysis of 5,10-methenyltetrahydrofolate to 10-formyltetrahydrofolate. The chain is Bifunctional protein FolD from Rickettsia typhi (strain ATCC VR-144 / Wilmington).